The chain runs to 206 residues: Max dimerization protein 3 (206 aa).

The interval 8–25 (IQVLLQAAEFLERREREA) is interaction with SIN3A and SIN3B. One can recognise a bHLH domain in the interval 57–109 (SGRHVHNELEKRRRAQLKRCLEQLRQQMPLGVDHTRYTTLSLLRGARMHIQKL).

In terms of assembly, efficient DNA binding requires dimerization with another bHLH protein. Binds DNA as a heterodimer with MAX. Interacts with SIN3A AND SIN3B. Interacts with RNF17.

Its subcellular location is the nucleus. Functionally, transcriptional repressor. Binds with MAX to form a sequence-specific DNA-binding protein complex which recognizes the core sequence 5'-CAC[GA]TG-3'. Antagonizes MYC transcriptional activity by competing for MAX and suppresses MYC dependent cell transformation. This is Max dimerization protein 3 (Mxd3) from Rattus norvegicus (Rat).